Consider the following 1276-residue polypeptide: MKYSLPWLLTSSALVFSLHPLMAANTDLSSSDNYENGSSGSAAFTAKETSDASGTTYTLTSDVSITNVSAITPADKSCFTNTGGALSFVGADHSLVLQTIALTHDGAAINNTNTALSFSGFSSLLIDSAPATGTSGGKGAICVTNTEGGTATFTDNASVTLQKNTSEKDGAAVSAYSIDLAKTTTAALLDQNTSTKNGGALCSTANTTVQGNSGTVTFSSNTATDKGGGIYSKEKDSTLDANTGVVTFKSNTAKTGGAWSSDDNLALTGNTQVLFQENKTTGSAAQANNPEGCGGAICCYLATATDKTGLAISQNQEMSFTSNTTTANGGAIYATKCTLDGNTTLTFDQNTATAGCGGAIYTETEDFSLKGSTGTVTFSTNTAKTGGALYSKGNSSLTGNTNLLFSGNKATGPSNSSANQEGCGGAILSFLESASVSTKKGLWIEDNENVSLSGNTATVSGGAIYATKCALHGNTTLTFDGNTAETAGGAIYTETEDFTLTGSTGTVTFSTNTAKTAGALHTKGNTSFTKNKALVFSGNSATATATTTTDQEGCGGAILCNISESDIATKSLTLTENESLSFINNTAKRSGGGIYAPKCVISGSESINFDGNTAETSGGAIYSKNLSITANGPVSFTNNSGGKGGAIYIADSGELSLEAIDGDITFSGNRATEGTSTPNSIHLGAGAKITKLAAAPGHTIYFYDPITMEAPASGGTIEELVINPVVKAIVPPPQPKNGPIASVPVVPVAPANPNTGTIVFSSGKLPSQDASIPANTTTILNQKINLAGGNVVLKEGATLQVYSFTQQPDSTVFMDAGTTLETTTTNNTDGSIDLKNLSVNLDALDGKRMITIAVNSTSGGLKISGDLKFHNNEGSFYDNPGLKANLNLPFLDLSSTSGTVNLDDFNPIPSSMAAPDYGYQGSWTLVPKVGAGGKVTLVAEWQALGYTPKPELRATLVPNSLWNAYVNIHSIQQEIATAMSDAPSHPGIWIGGIGNAFHQDKQKENAGFRLISRGYIVGGSMTTPQEYTFAVAFSQLFGKSKDYVVSDIKSQVYAGSLCAQSSYVIPLHSSLRRHVLSKVLPELPGETPLVLHGQVSYGRNHHNMTTKLANNTQGKSDWDSHSFAVEVGGSLPVDLNYRYLTSYSPYVKLQVVSVNQKGFQEVAADPRIFDASHLVNVSIPMGLTFKHESAKPPSALLLTLGYAVDAYRDHPHCLTSLTNGTSWSTFATNLSRQAFFAEASGHLKLLHGLDCFASGSCELRSSSRSYNANCGTRYSF.

The N-terminal stretch at 1 to 23 is a signal peptide; sequence MKYSLPWLLTSSALVFSLHPLMA. The 296-residue stretch at 981–1276 folds into the Autotransporter domain; that stretch reads DAPSHPGIWI…NANCGTRYSF (296 aa).

The protein belongs to the PMP outer membrane protein family.

The protein localises to the secreted. The protein resides in the cell wall. Its subcellular location is the cell outer membrane. The sequence is that of Probable outer membrane protein pmp6 (pmp6) from Chlamydia pneumoniae (Chlamydophila pneumoniae).